We begin with the raw amino-acid sequence, 570 residues long: Urease subunit alpha (570 aa).

The region spanning 131–570 is the Urease domain; the sequence is GGMDSHIHFI…LPMAQRYFLF (440 aa). Positions 136, 138, and 219 each coordinate Ni(2+). An N6-carboxylysine modification is found at lysine 219. Position 221 (histidine 221) interacts with substrate. Residues histidine 248 and histidine 274 each coordinate Ni(2+). The Proton donor role is filled by histidine 322. Aspartate 362 is a binding site for Ni(2+).

It belongs to the metallo-dependent hydrolases superfamily. Urease alpha subunit family. In terms of assembly, heterotrimer of UreA (gamma), UreB (beta) and UreC (alpha) subunits. Three heterotrimers associate to form the active enzyme. Ni cation is required as a cofactor. Post-translationally, carboxylation allows a single lysine to coordinate two nickel ions.

The protein resides in the cytoplasm. The enzyme catalyses urea + 2 H2O + H(+) = hydrogencarbonate + 2 NH4(+). The protein operates within nitrogen metabolism; urea degradation; CO(2) and NH(3) from urea (urease route): step 1/1. This chain is Urease subunit alpha, found in Rhizobium johnstonii (strain DSM 114642 / LMG 32736 / 3841) (Rhizobium leguminosarum bv. viciae).